Reading from the N-terminus, the 1178-residue chain is DNA-directed RNA polymerase subunit beta (1178 aa).

The protein belongs to the RNA polymerase beta chain family. The RNAP catalytic core consists of 2 alpha, 1 beta, 1 beta' and 1 omega subunit. When a sigma factor is associated with the core the holoenzyme is formed, which can initiate transcription.

The catalysed reaction is RNA(n) + a ribonucleoside 5'-triphosphate = RNA(n+1) + diphosphate. Its function is as follows. DNA-dependent RNA polymerase catalyzes the transcription of DNA into RNA using the four ribonucleoside triphosphates as substrates. This chain is DNA-directed RNA polymerase subunit beta, found in Treponema pallidum (strain Nichols).